The following is a 206-amino-acid chain: Cytochrome c biogenesis ATP-binding export protein CcmA (206 aa).

In terms of domain architecture, ABC transporter spans 2 to 206 (LEARDVVCIR…IQLTPSEGTP (205 aa)). 34–41 (GANGVGKT) contacts ATP.

This sequence belongs to the ABC transporter superfamily. CcmA exporter (TC 3.A.1.107) family. As to quaternary structure, the complex is composed of two ATP-binding proteins (CcmA) and two transmembrane proteins (CcmB).

It localises to the cell inner membrane. The catalysed reaction is heme b(in) + ATP + H2O = heme b(out) + ADP + phosphate + H(+). Part of the ABC transporter complex CcmAB involved in the biogenesis of c-type cytochromes; once thought to export heme, this seems not to be the case, but its exact role is uncertain. Responsible for energy coupling to the transport system. This is Cytochrome c biogenesis ATP-binding export protein CcmA from Pectobacterium atrosepticum (strain SCRI 1043 / ATCC BAA-672) (Erwinia carotovora subsp. atroseptica).